The following is a 362-amino-acid chain: Glutaminase-asparaginase (362 aa).

Residues 1–25 form the signal peptide; the sequence is MKSALKTFVPGALALLLLFPVAAQA. One can recognise an Asparaginase/glutaminase domain in the interval 35-362; that stretch reads ANVVILATGG…KELQRMFWEY (328 aa). The active-site Acyl-ester intermediate is the Thr45. Substrate contacts are provided by residues Ser92 and 125–126; that span reads TD.

This sequence belongs to the asparaginase 1 family. As to quaternary structure, homotetramer.

It is found in the periplasm. The enzyme catalyses L-glutamine + H2O = L-glutamate + NH4(+). The catalysed reaction is L-asparagine + H2O = L-aspartate + NH4(+). The chain is Glutaminase-asparaginase from Pseudomonas fluorescens biotype A.